The primary structure comprises 397 residues: Acetate kinase (397 aa).

Residue N8 participates in Mg(2+) binding. ATP is bound at residue K15. Residue R89 coordinates substrate. The active-site Proton donor/acceptor is the D146. Residues 206-210 (HLGNG), 280-282 (DMR), and 328-332 (GVGEN) contribute to the ATP site. Position 382 (E382) interacts with Mg(2+).

It belongs to the acetokinase family. In terms of assembly, homodimer. It depends on Mg(2+) as a cofactor. Mn(2+) serves as cofactor.

The protein localises to the cytoplasm. It catalyses the reaction acetate + ATP = acetyl phosphate + ADP. It functions in the pathway metabolic intermediate biosynthesis; acetyl-CoA biosynthesis; acetyl-CoA from acetate: step 1/2. Functionally, catalyzes the formation of acetyl phosphate from acetate and ATP. Can also catalyze the reverse reaction. The sequence is that of Acetate kinase from Leifsonia xyli subsp. xyli (strain CTCB07).